Here is a 347-residue protein sequence, read N- to C-terminus: Probable tRNA N6-adenosine threonylcarbamoyltransferase (347 aa).

A divalent metal cation is bound by residues His109, His113, and Tyr130. Substrate contacts are provided by residues 130-134, Asp162, Gly177, Glu181, and Asn277; that span reads YVSGG. A divalent metal cation is bound at residue Asp305.

It belongs to the KAE1 / TsaD family. In terms of assembly, component of the EKC/KEOPS complex; the whole complex dimerizes. A divalent metal cation is required as a cofactor.

It localises to the cytoplasm. The protein localises to the nucleus. It catalyses the reaction L-threonylcarbamoyladenylate + adenosine(37) in tRNA = N(6)-L-threonylcarbamoyladenosine(37) in tRNA + AMP + H(+). Component of the EKC/KEOPS complex that is required for the formation of a threonylcarbamoyl group on adenosine at position 37 (t(6)A37) in tRNAs that read codons beginning with adenine. The complex is probably involved in the transfer of the threonylcarbamoyl moiety of threonylcarbamoyl-AMP (TC-AMP) to the N6 group of A37. Likely plays a direct catalytic role in this reaction, but requires other protein(s) of the complex to fulfill this activity. This Drosophila melanogaster (Fruit fly) protein is Probable tRNA N6-adenosine threonylcarbamoyltransferase.